The chain runs to 214 residues: Riboflavin kinase (214 aa).

The interval methionine 1–serine 26 is disordered. Mg(2+) is bound by residues threonine 44 and asparagine 46. Glutamate 112 serves as the catalytic Nucleophile.

It belongs to the flavokinase family. It depends on Zn(2+) as a cofactor. The cofactor is Mg(2+).

It catalyses the reaction riboflavin + ATP = FMN + ADP + H(+). The protein operates within cofactor biosynthesis; FMN biosynthesis; FMN from riboflavin (ATP route): step 1/1. In terms of biological role, catalyzes the phosphorylation of riboflavin (vitamin B2) to form flavin mononucleotide (FMN) coenzyme. This Aspergillus clavatus (strain ATCC 1007 / CBS 513.65 / DSM 816 / NCTC 3887 / NRRL 1 / QM 1276 / 107) protein is Riboflavin kinase (fmn1).